Consider the following 344-residue polypeptide: Glycerol-3-phosphate dehydrogenase [NAD(P)+] (344 aa).

Residues Ser-11, Trp-12, His-32, Arg-33, and Lys-106 each coordinate NADPH. Positions 106, 136, and 138 each coordinate sn-glycerol 3-phosphate. Position 140 (Ala-140) interacts with NADPH. Lys-192, Asp-245, Ser-255, Arg-256, and Asn-257 together coordinate sn-glycerol 3-phosphate. Catalysis depends on Lys-192, which acts as the Proton acceptor. Arg-256 serves as a coordination point for NADPH. NADPH contacts are provided by Val-280 and Glu-282.

This sequence belongs to the NAD-dependent glycerol-3-phosphate dehydrogenase family.

Its subcellular location is the cytoplasm. It carries out the reaction sn-glycerol 3-phosphate + NAD(+) = dihydroxyacetone phosphate + NADH + H(+). It catalyses the reaction sn-glycerol 3-phosphate + NADP(+) = dihydroxyacetone phosphate + NADPH + H(+). Its pathway is membrane lipid metabolism; glycerophospholipid metabolism. Functionally, catalyzes the reduction of the glycolytic intermediate dihydroxyacetone phosphate (DHAP) to sn-glycerol 3-phosphate (G3P), the key precursor for phospholipid synthesis. This is Glycerol-3-phosphate dehydrogenase [NAD(P)+] from Geobacillus kaustophilus (strain HTA426).